We begin with the raw amino-acid sequence, 462 residues long: L-seryl-tRNA(Sec) selenium transferase (462 aa).

At lysine 295 the chain carries N6-(pyridoxal phosphate)lysine.

It belongs to the SelA family. Homodecamer; pentamer of dimers. Binds only one seryl-tRNA(Sec) per dimer. Pyridoxal 5'-phosphate is required as a cofactor.

Its subcellular location is the cytoplasm. It catalyses the reaction L-seryl-tRNA(Sec) + selenophosphate + H(+) = L-selenocysteinyl-tRNA(Sec) + phosphate. It participates in aminoacyl-tRNA biosynthesis; selenocysteinyl-tRNA(Sec) biosynthesis; selenocysteinyl-tRNA(Sec) from L-seryl-tRNA(Sec) (bacterial route): step 1/1. Converts seryl-tRNA(Sec) to selenocysteinyl-tRNA(Sec) required for selenoprotein biosynthesis. The protein is L-seryl-tRNA(Sec) selenium transferase of Klebsiella pneumoniae subsp. pneumoniae (strain ATCC 700721 / MGH 78578).